A 476-amino-acid polypeptide reads, in one-letter code: Inactive glucose-1-phosphate adenylyltransferase small subunit 2, chloroplastic (476 aa).

Residues 1 to 55 (MQISSSSFITKFTNLHMVRSTSDHHQWRHNYNLKQLFIPNLSVSNSQHLPLNQSV) constitute a chloroplast transit peptide.

This sequence belongs to the bacterial/plant glucose-1-phosphate adenylyltransferase family. In terms of assembly, heterotetramer. In terms of tissue distribution, expressed at very low levels in leaves, inflorescences, fruits, and roots.

Its subcellular location is the plastid. It is found in the chloroplast. This chain is Inactive glucose-1-phosphate adenylyltransferase small subunit 2, chloroplastic, found in Arabidopsis thaliana (Mouse-ear cress).